Reading from the N-terminus, the 113-residue chain is Dynein light chain Tctex-type 1 (113 aa).

N-acetylmethionine is present on Met-1. Positions 41 to 113 are interaction with GNB1; sequence QWTTNVVEQT…CIVSAFGLSI (73 aa).

The protein belongs to the dynein light chain Tctex-type family. In terms of assembly, homodimer. The cytoplasmic dynein 1 complex consists of two catalytic heavy chains (HCs) and a number of non-catalytic subunits presented by intermediate chains (ICs), light intermediate chains (LICs) and light chains (LCs); the composition seems to vary in respect to the IC, LIC and LC composition. The heavy chain homodimer serves as a scaffold for the probable homodimeric assembly of the respective non-catalytic subunits. The ICs and LICs bind directly to the HC dimer and dynein LCs assemble on the IC dimer. DYNLT1 and DYNLT3 compete for association with dynein IC (DYNC1I1 or DYNC1I2). Self-associates. Interacts with RHO. Interacts with DYNC1I1 and DYNC1I2. Interacts with DOC2A, DOC2B and SCN10A. Interacts with PVR. Interacts with SVIL isoform 2. Interacts with GNB1; the interaction occurs in presence of guanine nucleotide-binding protein G(T) subunit gamma; the interaction diminishes the association of DYNLT1 with dynein IC (DYNC1I1 or DYNC1I2). Interacts with GNB2, GNB3 and GNB5; the interactions occur in presence of guanine nucleotide-binding protein G(T) subunit gamma. Interacts with ACVR2B and ARHGEF2. Interacts with DNAI4. Interacts with CFAP61. Post-translationally, phosphorylated by BMPR2. The phosphorylation status is proposed to regulate the association with the cytoplasmic dynein complex and may have role in cytoplasmic dynein cargo release.

The protein resides in the golgi apparatus. It is found in the cytoplasm. It localises to the cytoskeleton. Its subcellular location is the spindle. Its function is as follows. Acts as one of several non-catalytic accessory components of the cytoplasmic dynein 1 complex that are thought to be involved in linking dynein to cargos and to adapter proteins that regulate dynein function. Cytoplasmic dynein 1 acts as a motor for the intracellular retrograde motility of vesicles and organelles along microtubules. Binds to transport cargos and is involved in apical cargo transport such as rhodopsin-bearing vesicles in polarized epithelia. Is involved in intracellular targeting of D-type retrovirus gag polyproteins to the cytoplasmic assembly site. May also be a accessory component of axonemal dynein. Plays a role in neuronal morphogenesis; the function is independent of cytoplasmic dynein and seems to be coupled to regulation of the actin cytoskeleton by enhancing Rac1 activity. Required for neurite outgrowth. The function in neurogenesis may be regulated by association with a G-protein beta-gamma dimer. May function as a receptor-independent activator of heterotrimeric G-protein signaling; the activation appears to be independent of a nucleotide exchange. Plays a role in regulating neurogenesis; inhibits the genesis of neurons from precursor cells during cortical development presumably by antagonizing ARHGEF2. Unrelated to the role in retrograde microtubule-associated movement may play a role in the dimerization of cytoplasmic proteins/domains such as for ACVR2B. Binds to the cytoplasmic domain of ACVR2B and, in vitro, inhibits ACVR2B signaling. Involved in the regulation of mitotic spindle orientation. The chain is Dynein light chain Tctex-type 1 (Dynlt1) from Rattus norvegicus (Rat).